The sequence spans 293 residues: 4-hydroxy-tetrahydrodipicolinate synthase (293 aa).

Position 45 (T45) interacts with pyruvate. Y133 (proton donor/acceptor) is an active-site residue. K162 functions as the Schiff-base intermediate with substrate in the catalytic mechanism. A pyruvate-binding site is contributed by I204.

This sequence belongs to the DapA family. Homotetramer; dimer of dimers.

The protein localises to the cytoplasm. The catalysed reaction is L-aspartate 4-semialdehyde + pyruvate = (2S,4S)-4-hydroxy-2,3,4,5-tetrahydrodipicolinate + H2O + H(+). The protein operates within amino-acid biosynthesis; L-lysine biosynthesis via DAP pathway; (S)-tetrahydrodipicolinate from L-aspartate: step 3/4. Its function is as follows. Catalyzes the condensation of (S)-aspartate-beta-semialdehyde [(S)-ASA] and pyruvate to 4-hydroxy-tetrahydrodipicolinate (HTPA). The protein is 4-hydroxy-tetrahydrodipicolinate synthase of Chelativorans sp. (strain BNC1).